Reading from the N-terminus, the 129-residue chain is Glycine cleavage system H protein (129 aa).

One can recognise a Lipoyl-binding domain in the interval Thr-24–Arg-106. Lys-65 is modified (N6-lipoyllysine).

It belongs to the GcvH family. As to quaternary structure, the glycine cleavage system is composed of four proteins: P, T, L and H. (R)-lipoate is required as a cofactor.

In terms of biological role, the glycine cleavage system catalyzes the degradation of glycine. The H protein shuttles the methylamine group of glycine from the P protein to the T protein. The sequence is that of Glycine cleavage system H protein from Enterobacter sp. (strain 638).